A 1104-amino-acid polypeptide reads, in one-letter code: Protein KIBRA (1104 aa).

2 WW domains span residues 6–39 and 53–86; these read LPLP…DPRD and DELP…DPRV. Residues 107-193 are a coiled coil; it reads LSAQKEIYQV…ELQFKERGFQ (87 aa). Position 141 is a phosphoserine (Ser141). 2 disordered regions span residues 429–449 and 509–547; these read SMQS…RGSL and TQKA…SPPC. A compositionally biased stretch (low complexity) spans 527–542; that stretch reads TPRSMTSLSPRSSLSS. Ser535 is modified (phosphoserine). Ser542 is subject to Phosphoserine; by CDK1. The C2 domain maps to 659-782; sequence GATRVQIALK…RSGERSTRWY (124 aa). Residues 822 to 949 form a disordered region; it reads LEKRQEGRSS…DSSTLSKKPP (128 aa). An interaction with histone H3 region spans residues 836–1104; it reads EGSWTYEEEA…NIPALSADDV (269 aa). The span at 841–862 shows a compositional bias: acidic residues; sequence YEEEASENEAVAEEEEEGEEDV. A phosphoserine mark is found at Ser887, Ser891, and Ser919. Polar residues predominate over residues 916–930; it reads IIRSKTFSPGPQSQY. Phosphothreonine is present on Thr921. Ser923 bears the Phosphoserine; by CDK1 mark. Phosphoserine is present on Ser939. Interaction with PRKCZ regions lie at residues 945-988 and 948-967; these read SKKP…LDLQ and PPFV…RPSS. A phosphoserine; by PKC/PRKCZ mark is found at Ser967 and Ser970. The stretch at 994–1024 forms a coiled coil; it reads HSQLTQEISVLKELKEHLEQAKNHGEKELPQ. The ADDV motif signature appears at 1102-1104; it reads DDV.

The protein belongs to the WWC family. KIBRA subfamily. Homodimer. Forms heterodimers with WWC2 and WWC3. Interacts with DDN. Interacts with DYNLL1 and histone H3. The interaction with DYNLL1 is mandatory for the recruitment and transactivation functions of ESR1 or DYNLL1 to the target chromatin and the interaction with histone H3 ensures proper regulatory interaction of WWC1-DYNLL1-ESR1 complexes with target chromatin. Interacts (via WW domains) with DDR1 (via PPxY motif) in a collagen-regulated manner. Interacts with PRKCZ (via the protein kinase domain). Forms a tripartite complex with DDR1 and PRKCZ, but predominantly in the absence of collagen. Interacts (via the ADDV motif) with PATJ (via PDZ domain 8). Interacts (via WW domains) with SYNPO (via PPxY motifs). Interacts with NF2 and SNX4. Interacts with CCDC141; retains AMPAR in the cytosol after internalization. Interacts with DLC1 and PRKCZ. Interacts (via WW domains) with LATS1 and LATS2. Post-translationally, phosphorylation at Ser-542 and Ser-923 by CDK1 in response to spindle damage stress regulates mitotic exit, these two sites are dephosphorylated by CDC14B. Mammary epithelium.

It is found in the cytoplasm. It localises to the perinuclear region. Its subcellular location is the nucleus. The protein resides in the cell projection. The protein localises to the ruffle membrane. It is found in the cytosol. Regulator of the Hippo signaling pathway, also known as the Salvador-Warts-Hippo (SWH) pathway. Enhances phosphorylation of LATS1 and YAP1 and negatively regulates cell proliferation and organ growth due to a suppression of the transcriptional activity of YAP1, the major effector of the Hippo pathway. Along with NF2 can synergistically induce the phosphorylation of LATS1 and LATS2 and function in the regulation of Hippo signaling pathway. Acts as a transcriptional coactivator of ESR1 which plays an essential role in DYNLL1-mediated ESR1 transactivation. Modulates directional migration of podocytes. May be associated with memory performance. Regulates collagen-stimulated activation of the ERK/MAPK cascade. Plays an important role in regulating AMPA-selective glutamate receptors (AMPARs) trafficking. The chain is Protein KIBRA (Wwc1) from Mus musculus (Mouse).